Consider the following 383-residue polypeptide: tRNA pseudouridine synthase B (383 aa).

Residue Asp-53 is the Nucleophile of the active site.

The protein belongs to the pseudouridine synthase TruB family. Type 1 subfamily.

The catalysed reaction is uridine(55) in tRNA = pseudouridine(55) in tRNA. In terms of biological role, responsible for synthesis of pseudouridine from uracil-55 in the psi GC loop of transfer RNAs. The polypeptide is tRNA pseudouridine synthase B (Tropheryma whipplei (strain TW08/27) (Whipple's bacillus)).